The sequence spans 912 residues: Receptor protein kinase WSS1 (912 aa).

The N-terminal stretch at 1–27 (MGRDARRLPLLPFLLLLLAAAAGVAES) is a signal peptide. Over 28–477 (ATDAEAIHDL…AGGGKSKPNT (450 aa)) the chain is Extracellular. 3 LRR repeats span residues 64 to 88 (AGKV…LSSL), 89 to 111 (TSLT…LARM), and 112 to 134 (GSLA…FLHG). 9 N-linked (GlcNAc...) asparagine glycosylation sites follow: Asn-159, Asn-170, Asn-196, Asn-256, Asn-286, Asn-371, Asn-376, Asn-387, and Asn-400. 6 LRR repeats span residues 184–208 (LVSL…LSSL), 235–261 (MKSL…TQLE), 281–303 (LMSL…AFAA), 364–388 (SSDV…LANL), 389–411 (TRLA…VLTT), and 413–438 (PSLT…SVNV). Residues 448–472 (SSGSSGGGGGSDGDSSSSDSAGGGK) are disordered. A helical transmembrane segment spans residues 478 to 498 (GMIIGIIVAVIILFACIALLV). Topologically, residues 499 to 912 (HHRKKKNVEK…SFNVPRKYNG (414 aa)) are cytoplasmic. Residues 580–859 (FSEDCILGRG…HCVNRLSSLV (280 aa)) enclose the Protein kinase domain. Residues 586–594 (LGRGGFGVV) and Lys-607 contribute to the ATP site. Catalysis depends on Asp-708, which acts as the Proton acceptor.

The protein belongs to the protein kinase superfamily. Ser/Thr protein kinase family. The cofactor is Mn(2+). Expressed in young and mature leaves.

It is found in the cell membrane. The enzyme catalyses L-seryl-[protein] + ATP = O-phospho-L-seryl-[protein] + ADP + H(+). It catalyses the reaction L-threonyl-[protein] + ATP = O-phospho-L-threonyl-[protein] + ADP + H(+). In terms of biological role, transmembrane kinase receptor involved in the regulation of reactive oxygen species (ROS) homeostasis, chloroplast development and leaf senescence. The sequence is that of Receptor protein kinase WSS1 from Oryza sativa subsp. japonica (Rice).